Here is a 141-residue protein sequence, read N- to C-terminus: Succinate dehydrogenase [ubiquinone] cytochrome b small subunit 2 (141 aa).

A mitochondrion-targeting transit peptide spans Met1 to Thr24. Over Ser25–Phe44 the chain is Mitochondrial matrix. Residues Lys45–Phe63 traverse the membrane as a helical segment. The Mitochondrial intermembrane segment spans residues Ile64–Ala68. The chain crosses the membrane as a helical span at residues Met69–Val89. His80 contacts heme b. The Mitochondrial matrix segment spans residues Ser90–Arg104. Tyr92 is a binding site for a ubiquinone. Residues Val105–Asn126 form a helical membrane-spanning segment. Residues Ser127–Leu141 lie on the Mitochondrial intermembrane side of the membrane.

This sequence belongs to the CybS family. As to quaternary structure, component of the mitochondrial electron transport chain complex II composed of four subunits: a flavoprotein (Fp), an iron-sulfur protein (Ip), and a large cytochrome b (CybL) subunit and a small cytochrome b (CybS) subunit. There are 2 developmental stage-specific forms of complex II which have the Ip and CybL subunits in common. Complex II from the free-living larvae (aerobic environment) acts as a succinate dehydrogenase and is composed of the common subunit Ip and CybL and the stage specific subunits FpL and CybSL. Complex II from parasitic larvae and adults (anaerobic environment) acts as a fumarate reductase and is composed of the common subunit Ip and CybL and the stage specific subunits FpA and CybSA. The cofactor is heme b.

Its subcellular location is the mitochondrion inner membrane. The protein operates within carbohydrate metabolism; tricarboxylic acid cycle; fumarate from succinate (eukaryal route): step 1/1. Functionally, membrane-bound small subunit (CybS) of the mitochondrial electron transport chain complex II, which together with the membrane-bound large subunit (CybL), anchor the catalytic subunits to the inner mitochondria membrane. During the free-living egg-larvae stages, which occur in an aerobic environment, complex II acts as a succinate dehydrogenase by transferring electrons from succinate to ubiquinone. The sequence is that of Succinate dehydrogenase [ubiquinone] cytochrome b small subunit 2 from Ascaris suum (Pig roundworm).